Here is an 829-residue protein sequence, read N- to C-terminus: Transcription activator GutR (829 aa).

Positions I42–G61 form a DNA-binding region, H-T-H motif. An ATP-binding site is contributed by G200–T207. 3 TPR repeats span residues H697–Y730, I736–A769, and I775–W808.

Activator of the glucitol dehydrogenase gene (gutB). The sequence is that of Transcription activator GutR (gutR) from Bacillus subtilis (strain 168).